The following is a 23-amino-acid chain: Aurein-4.4 (23 aa).

It belongs to the frog skin active peptide (FSAP) family. Aurein subfamily. Expressed by the skin dorsal glands.

Its subcellular location is the secreted. Has no antimicrobial or anticancer activity. This Ranoidea aurea (Green and golden bell frog) protein is Aurein-4.4.